A 68-amino-acid chain; its full sequence is Probable tautomerase jhp_0858 (68 aa).

Catalysis depends on Pro2, which acts as the Proton acceptor; via imino nitrogen.

This sequence belongs to the 4-oxalocrotonate tautomerase family.

The protein is Probable tautomerase jhp_0858 of Helicobacter pylori (strain J99 / ATCC 700824) (Campylobacter pylori J99).